A 401-amino-acid polypeptide reads, in one-letter code: MSVCSSDLSYSSRVCLPGSCDSCSDSWQVDDCPESCCEPPCCAPSCCAPAPCLSLVCTPVSRVSSPCCPVTCEPSPCQSGCTSSCTPSCCQQSSCQLACCASSPCQQACCVPVCCKTVCCKPVCCVPVCCGDSSCCQQSSCQSACCTSSPCQQACCVPICCKPVCSGISSSCCQQSSCVSCVSSPCCQAVCEPSPCQSGCISSCTPSCCQQSSCQPACCTSSSCQQACCVPVCCKTVCCKPVCSEDSSSCCQQSSCQPACCTSSPCQQACCVPVCCKPVCCKPVCSVPICSGASSLCCQQSSCQPACCTSSQSQQGCCVPVCCKPVSCVPVCSGASSSCCQQSSCQPACCTTSCCRPSSSVSLLCRPVCRPACCVPVPSCCAPTSSCQPSCCRPASCVSLL.

Repeat copies occupy residues 36–40 (CCEPP), 41–45 (CCAPS), 46–50 (CCAPA), 67–71 (CCPVT), 89–93 (CCQQS), 99–103 (CCASS), 109–113 (CCVPV), 114–118 (CCKTV), 119–123 (CCKPV), 124–128 (CCVPV), 129–133 (CCGDS), 135–139 (CCQQS), 145–149 (CCTSS), 155–159 (CCVPI), 160–164 (CCKPV), 172–176 (CCQQS), 186–190 (CCQAV), 208–212 (CCQQS), 218–222 (CCTSS), 228–232 (CCVPV), 233–237 (CCKTV), 238–242 (CCKPV), 250–254 (CCQQS), 270–274 (CCVPV), 275–279 (CCKPV), 280–284 (CCKPV), 297–301 (CCQQS), 307–311 (CCTSS), 317–321 (CCVPV), 322–326 (CCKPV), 339–343 (CCQQS), 349–353 (CCTTS), 354–358 (CCRPS), 373–377 (CCVPV), and 391–395 (CCRPA). The tract at residues 36 to 395 (CCEPPCCAPS…SCQPSCCRPA (360 aa)) is 36 X 5 AA repeats of C-C-X(3).

Belongs to the KRTAP type 10 family. In terms of assembly, interacts with hair keratins. In terms of tissue distribution, restricted to hair root, not detected in any other tissues.

Its function is as follows. In the hair cortex, hair keratin intermediate filaments are embedded in an interfilamentous matrix, consisting of hair keratin-associated proteins (KRTAP), which are essential for the formation of a rigid and resistant hair shaft through their extensive disulfide bond cross-linking with abundant cysteine residues of hair keratins. The matrix proteins include the high-sulfur and high-glycine-tyrosine keratins. The polypeptide is Keratin-associated protein 10-4 (KRTAP10-4) (Homo sapiens (Human)).